Consider the following 269-residue polypeptide: Signal recognition particle receptor subunit beta (269 aa).

Residues 35 to 55 (LLSVAVAVLAVLLTLVFWKFI) form a helical membrane-spanning segment. GTP contacts are provided by residues 69–77 (GLCDSGKTL) and 90–93 (TQTS). S110 carries the post-translational modification Phosphoserine. G118 is a binding site for GTP. The residue at position 212 (T212) is a Phosphothreonine. A246 contributes to the GTP binding site.

It belongs to the SRP receptor beta subunit family. In terms of assembly, heterodimer with SRPRA.

Its subcellular location is the endoplasmic reticulum membrane. In terms of biological role, component of the signal recognition particle (SRP) complex receptor (SR). Ensures, in conjunction with the SRP complex, the correct targeting of the nascent secretory proteins to the endoplasmic reticulum membrane system. May mediate the membrane association of SR. In Rattus norvegicus (Rat), this protein is Signal recognition particle receptor subunit beta (Srprb).